The chain runs to 88 residues: Small ribosomal subunit protein uS15c (88 aa).

This sequence belongs to the universal ribosomal protein uS15 family. As to quaternary structure, part of the 30S ribosomal subunit.

The protein resides in the plastid. It localises to the chloroplast. The chain is Small ribosomal subunit protein uS15c (rps15) from Barbarea verna (Land cress).